A 399-amino-acid chain; its full sequence is Acetate kinase (399 aa).

A Mg(2+)-binding site is contributed by asparagine 8. Lysine 15 serves as a coordination point for ATP. A substrate-binding site is contributed by arginine 89. Aspartate 146 acts as the Proton donor/acceptor in catalysis. ATP is bound by residues 206-210 (HVGNG), 283-285 (DMR), and 331-335 (GMGEN). Position 383 (glutamate 383) interacts with Mg(2+).

Belongs to the acetokinase family. Homodimer. Requires Mg(2+) as cofactor. It depends on Mn(2+) as a cofactor.

It localises to the cytoplasm. The catalysed reaction is acetate + ATP = acetyl phosphate + ADP. Its pathway is metabolic intermediate biosynthesis; acetyl-CoA biosynthesis; acetyl-CoA from acetate: step 1/2. Catalyzes the formation of acetyl phosphate from acetate and ATP. Can also catalyze the reverse reaction. In Streptococcus equi subsp. zooepidemicus (strain H70), this protein is Acetate kinase.